A 140-amino-acid chain; its full sequence is Pro-variola growth factor (140 aa).

A signal peptide spans 1-18 (MSMKYLMLLFAAMIIRSF). Residues 19-100 (ANSGNAIETT…SEKPNTTTSY (82 aa)) are Extracellular-facing. An N-linked (GlcNAc...) asparagine; by host glycan is attached at Asn34. The EGF-like domain occupies 41–81 (AIRLCGPEGDRYCFHGICIHARDIDGMYCRCSHGYTGIRCQ). 3 disulfides stabilise this stretch: Cys45–Cys58, Cys53–Cys69, and Cys71–Cys80. A glycan (N-linked (GlcNAc...) asparagine; by host) is linked at Asn95. The helical transmembrane segment at 101–121 (IPSPGIVLVLLVSIIVCCLLF) threads the bilayer. The Cytoplasmic portion of the chain corresponds to 122 to 140 (VYRFTRRTNKLPLQDMVVP).

The protein belongs to the orthopoxvirus OPG019 family. As to quaternary structure, variola growth factor interacts with host EGFR and promotes EGFR dimerization.

It localises to the host membrane. Its subcellular location is the secreted. In terms of biological role, stimulates cellular proliferation (hyperplasia)and mobility around infected cells to promote rapid and efficient spread of infection. This effect is beneficial for virus replication in vivo, because poxviruses replicate possibly better in proliferating cells than in quiescent cells. Acts by binding host EGFR, inducing its dimerization, autophosphorylation and leading to activation of several cellular pathways regulating cell proliferation or cell survival. The activation by host EGFR of mitogen activated protein kinases (MAPK) and extracellular-signal regulated kinases (ERK) are essential for the positive effect of vaccinia growth factor on poxvirus virulence in vivo. The sequence is that of Pro-variola growth factor (OPG019) from Variola virus (isolate Human/India/Ind3/1967) (VARV).